The following is an 899-amino-acid chain: ATP-dependent DNA helicase DDX31 (899 aa).

Basic residues-rich tracts occupy residues 1 to 12 (MNKHDQKKKRNK) and 21 to 31 (KKSKGFIKNKK). Residues 1-142 (MNKHDQKKKR…SKHKRNVPSK (142 aa)) are disordered. A compositionally biased stretch (acidic residues) spans 76-85 (NMNDDDDNNM). Residues 86–102 (NDDYNNNNIKGDYNNNN) are compositionally biased toward low complexity. Acidic residues predominate over residues 106-121 (DDVDDDDYDDDDDDNF). Positions 173–201 (FCDLKYILSESLINTLEKNEFIKMTSIQK) match the Q motif motif. The region spanning 204 to 433 (IPLFFKPNDI…NYCLTNNTMW (230 aa)) is the Helicase ATP-binding domain. An ATP-binding site is contributed by 217–224 (SMTGSGKT). The DEAD box motif lies at 332–335 (DEAD). Residues 463 to 472 (NRENSPLNIH) show a composition bias toward polar residues. Residues 463–517 (NRENSPLNIHNNDDNDDNDDNDENNGDNNNNNDDNNNNNDDNNNKNNDDDNNNTY) form a disordered region. Positions 476–487 (DNDDNDDNDENN) are enriched in acidic residues. Over residues 488–503 (GDNNNNNDDNNNNNDD) the composition is skewed to low complexity. The Helicase C-terminal domain maps to 593-782 (KITPVLERED…TIINHFKKFC (190 aa)).

It belongs to the DEAD box helicase family. DDX31/DBP7 subfamily.

Its subcellular location is the nucleus. It localises to the nucleolus. It catalyses the reaction ATP + H2O = ADP + phosphate + H(+). Has DNA helicase activity and may also have RNA helicase activity; the DNA helicase direction was not determined. Shows ssDNA and RNA dependent ATPase activity. The polypeptide is ATP-dependent DNA helicase DDX31 (DDX31) (Plasmodium falciparum (isolate 3D7)).